The chain runs to 65 residues: Gallinacin-1 alpha (65 aa).

A signal peptide spans Met-1–Ala-19. The propeptide occupies Gly-20 to Leu-25. Cystine bridges form between Cys-31/Cys-59, Cys-38/Cys-53, and Cys-43/Cys-60.

This sequence belongs to the beta-defensin family.

It is found in the secreted. The protein localises to the cytoplasmic granule. Its function is as follows. Has bactericidal activity. Potent activity against E.coli ML-35, L.monocytogenes EGD and C.albicans. The protein is Gallinacin-1 alpha of Gallus gallus (Chicken).